The primary structure comprises 451 residues: Macrophage scavenger receptor types I and II (451 aa).

The Cytoplasmic segment spans residues 1–50 (MEQWDHFHNQQEDTDSCSESVKFDARSMTALLPPNPKNSPSLQEKLKSFK). Serine 27 carries the phosphoserine modification. The helical; Signal-anchor for type II membrane protein transmembrane segment at 51-76 (AALIALYLLVFAVLIPLIGIVAAQLL) threads the bilayer. The interval 77 to 109 (KWETKNCSVSSTNANDITQSLTGKGNDSEEEMR) is spacer. Topologically, residues 77-451 (KWETKNCSVS…SEDAGVTCTL (375 aa)) are extracellular. Residues asparagine 82, asparagine 102, asparagine 143, asparagine 184, asparagine 221, asparagine 249, and asparagine 267 are each glycosylated (N-linked (GlcNAc...) asparagine). Residues 171 to 255 (NAIDEISKSL…VLNNITNDLR (85 aa)) adopt a coiled-coil conformation. Positions 267-346 (NITLIQGPPG…EKGSGNTLTP (80 aa)) are disordered. One can recognise a Collagen-like domain in the interval 273-341 (GPPGPPGEKG…KGQKGEKGSG (69 aa)). The region spanning 350–450 (VRLVGGSGPH…HSEDAGVTCT (101 aa)) is the SRCR domain. Cystine bridges form between cysteine 375/cysteine 439, cysteine 388/cysteine 449, and cysteine 419/cysteine 429.

As to quaternary structure, homotrimer. Interacts with MYO18A. In terms of tissue distribution, isoform I, isoform II and isoform III are expressed in monocyte-derived macrophages. Isoform I and isoform II are expressed in the liver, placenta and brain.

It is found in the membrane. Its function is as follows. Membrane glycoproteins implicated in the pathologic deposition of cholesterol in arterial walls during atherogenesis. Two types of receptor subunits exist. These receptors mediate the endocytosis of a diverse group of macromolecules, including modified low density lipoproteins (LDL). Isoform III does not internalize acetylated LDL. In Homo sapiens (Human), this protein is Macrophage scavenger receptor types I and II (MSR1).